Reading from the N-terminus, the 323-residue chain is tRNA dimethylallyltransferase (323 aa).

12–19 (GPTAAGKT) contributes to the ATP binding site. Residue 14-19 (TAAGKT) participates in substrate binding. Interaction with substrate tRNA stretches follow at residues 37–40 (DSAL) and 161–165 (QRLIR).

The protein belongs to the IPP transferase family. Monomer. Mg(2+) serves as cofactor.

It catalyses the reaction adenosine(37) in tRNA + dimethylallyl diphosphate = N(6)-dimethylallyladenosine(37) in tRNA + diphosphate. In terms of biological role, catalyzes the transfer of a dimethylallyl group onto the adenine at position 37 in tRNAs that read codons beginning with uridine, leading to the formation of N6-(dimethylallyl)adenosine (i(6)A). This is tRNA dimethylallyltransferase from Pseudomonas putida (strain ATCC 700007 / DSM 6899 / JCM 31910 / BCRC 17059 / LMG 24140 / F1).